The following is a 261-amino-acid chain: uncharacterized protein (261 aa).

Isoleucine 22–phenylalanine 46 contributes to the NADP(+) binding site. Serine 153 contacts substrate. Catalysis depends on tyrosine 166, which acts as the Proton acceptor.

The protein belongs to the short-chain dehydrogenases/reductases (SDR) family.

This is an uncharacterized protein from Escherichia coli (strain K12).